The following is a 132-amino-acid chain: Histone H2A.2 (132 aa).

Belongs to the histone H2A family. As to quaternary structure, the nucleosome is a histone octamer containing two molecules each of H2A, H2B, H3 and H4 assembled in one H3-H4 heterotetramer and two H2A-H2B heterodimers. The octamer wraps approximately 147 bp of DNA.

The protein localises to the nucleus. The protein resides in the chromosome. In terms of biological role, core component of nucleosome. Nucleosomes wrap and compact DNA into chromatin, limiting DNA accessibility to the cellular machineries which require DNA as a template. Histones thereby play a central role in transcription regulation, DNA repair, DNA replication and chromosomal stability. DNA accessibility is regulated via a complex set of post-translational modifications of histones, also called histone code, and nucleosome remodeling. The sequence is that of Histone H2A.2 from Leishmania infantum.